We begin with the raw amino-acid sequence, 126 residues long: Ribosome-binding factor A (126 aa).

It belongs to the RbfA family. Monomer. Binds 30S ribosomal subunits, but not 50S ribosomal subunits or 70S ribosomes.

It localises to the cytoplasm. Its function is as follows. One of several proteins that assist in the late maturation steps of the functional core of the 30S ribosomal subunit. Associates with free 30S ribosomal subunits (but not with 30S subunits that are part of 70S ribosomes or polysomes). Required for efficient processing of 16S rRNA. May interact with the 5'-terminal helix region of 16S rRNA. The polypeptide is Ribosome-binding factor A (Halorhodospira halophila (strain DSM 244 / SL1) (Ectothiorhodospira halophila (strain DSM 244 / SL1))).